The sequence spans 170 residues: Ribosome maturation factor RimM (170 aa).

Residues P98–F170 enclose the PRC barrel domain.

This sequence belongs to the RimM family. In terms of assembly, binds ribosomal protein uS19.

The protein resides in the cytoplasm. Its function is as follows. An accessory protein needed during the final step in the assembly of 30S ribosomal subunit, possibly for assembly of the head region. Essential for efficient processing of 16S rRNA. May be needed both before and after RbfA during the maturation of 16S rRNA. It has affinity for free ribosomal 30S subunits but not for 70S ribosomes. This is Ribosome maturation factor RimM from Xanthomonas axonopodis pv. citri (strain 306).